Reading from the N-terminus, the 272-residue chain is AA9 family lytic polysaccharide monooxygenase G (272 aa).

The signal sequence occupies residues 1–22 (MKGAGSASFLLTLLSTITRTSA). His-23 contacts Cu(2+). Asn-60 carries an N-linked (GlcNAc...) asparagine glycan. 2 disulfides stabilise this stretch: Cys-78–Cys-202 and Cys-121–Cys-125. His-110 is a Cu(2+) binding site. 2 residues coordinate O2: His-188 and Gln-197. Position 199 (Tyr-199) interacts with Cu(2+).

Belongs to the polysaccharide monooxygenase AA9 family. Cu(2+) is required as a cofactor.

Its subcellular location is the secreted. The catalysed reaction is [(1-&gt;4)-beta-D-glucosyl]n+m + reduced acceptor + O2 = 4-dehydro-beta-D-glucosyl-[(1-&gt;4)-beta-D-glucosyl]n-1 + [(1-&gt;4)-beta-D-glucosyl]m + acceptor + H2O.. Its function is as follows. Lytic polysaccharide monooxygenase (LPMO) that depolymerizes crystalline and amorphous polysaccharides via the oxidation of scissile alpha- or beta-(1-4)-glycosidic bonds, yielding C1 or C4 oxidation products. Catalysis by LPMOs requires the reduction of the active-site copper from Cu(II) to Cu(I) by a reducing agent and H(2)O(2) or O(2) as a cosubstrate. Acts preferentially on crystalline regions of cellulose such as highly crystalline algae cellulose. In Emericella nidulans (strain FGSC A4 / ATCC 38163 / CBS 112.46 / NRRL 194 / M139) (Aspergillus nidulans), this protein is AA9 family lytic polysaccharide monooxygenase G.